The chain runs to 260 residues: UPF0246 protein BURPS668_1321 (260 aa).

It belongs to the UPF0246 family.

This Burkholderia pseudomallei (strain 668) protein is UPF0246 protein BURPS668_1321.